We begin with the raw amino-acid sequence, 369 residues long: Quinolinate synthase (369 aa).

Residues histidine 47 and serine 64 each coordinate iminosuccinate. Cysteine 111 contributes to the [4Fe-4S] cluster binding site. Residues 142–144 (YVN) and serine 163 contribute to the iminosuccinate site. [4Fe-4S] cluster is bound at residue cysteine 231. Iminosuccinate contacts are provided by residues 257 to 259 (HPE) and threonine 274. Cysteine 321 is a [4Fe-4S] cluster binding site.

Belongs to the quinolinate synthase family. Type 3 subfamily. [4Fe-4S] cluster serves as cofactor.

It localises to the cytoplasm. It catalyses the reaction iminosuccinate + dihydroxyacetone phosphate = quinolinate + phosphate + 2 H2O + H(+). The protein operates within cofactor biosynthesis; NAD(+) biosynthesis; quinolinate from iminoaspartate: step 1/1. Catalyzes the condensation of iminoaspartate with dihydroxyacetone phosphate to form quinolinate. In Bacillus pumilus (strain SAFR-032), this protein is Quinolinate synthase.